The chain runs to 146 residues: Ribosome-binding factor A (146 aa).

Residues 125 to 146 (RDLDADDDKTKDDRAKDDKDSE) are disordered.

It belongs to the RbfA family. Monomer. Binds 30S ribosomal subunits, but not 50S ribosomal subunits or 70S ribosomes.

It is found in the cytoplasm. In terms of biological role, one of several proteins that assist in the late maturation steps of the functional core of the 30S ribosomal subunit. Associates with free 30S ribosomal subunits (but not with 30S subunits that are part of 70S ribosomes or polysomes). Required for efficient processing of 16S rRNA. May interact with the 5'-terminal helix region of 16S rRNA. This Mesorhizobium japonicum (strain LMG 29417 / CECT 9101 / MAFF 303099) (Mesorhizobium loti (strain MAFF 303099)) protein is Ribosome-binding factor A.